Reading from the N-terminus, the 66-residue chain is Hemicalcin (66 aa).

A signal peptide spans 1 to 21 (MRASLFIVIFVVSFITISCLS). The propeptide occupies 22–33 (TDDEEARWIEKR). Intrachain disulfides connect C36/C50, C43/C54, and C49/C65. The tract at residues 55 to 57 (KRR) is essential for stimulation of [3H]ryanodine binding to RYR1.

Belongs to the scorpion calcin family. In terms of tissue distribution, expressed by the venom gland.

Its subcellular location is the secreted. Its function is as follows. This toxin stabilizes ryanodine receptor 1 (RyR1) opening in a long-lasting subconductance state (20% and 38% of the full conductance state have been found). It promotes an increase in the opening probability at intermediate concentration. Furthermore, it triggers calcium release from sarcoplasmic vesicles (68 nM are enough to induce a sharp release, and 45% of the total calcium is released after toxin (100 nM) addition) probably by acting as a cell-penetrating peptide (CPP). In addition, it has been shown to dose-dependently stimulate ryanodine binding to RyR1 (EC(50)=6.9-71 nM). It also augments the bell-shaped calcium-[3H]ryanodine binding curve that is maximal at about 10 uM calcium concentration. It binds a different site as ryanodine. It acts synergistically with caffeine. In vivo, intracerebroventricular injection into mice induces neurotoxic symptoms, followed by death. The protein is Hemicalcin of Hemiscorpius lepturus (Scorpion).